Reading from the N-terminus, the 390-residue chain is Transforming growth factor beta-1 proprotein (390 aa).

The first 29 residues, 1–29 (MPPSGLRLLPLLLPLLWLLVLTPSRPAAG), serve as a signal peptide directing secretion. Residues 30–74 (LSTCKTIDMELVKRKRIETIRGQILSKLRLASPPSQGEVPPGPLP) are straightjacket domain. Residues 75–271 (EAVLALYNST…ATPLERAQHL (197 aa)) form an arm domain region. N-linked (GlcNAc...) asparagine glycans are attached at residues N82, N136, and N176. Residues 226 to 252 (DSKDNTLQVDINGFTTGRRGDLATIHG) are bowtie tail. Positions 244-246 (RGD) match the Cell attachment site motif. 4 disulfide bridges follow: C285/C294, C293/C356, C322/C387, and C326/C389.

The protein belongs to the TGF-beta family. Homodimer; disulfide-linked. Interacts with the serine proteases, HTRA1 and HTRA3: the interaction with either inhibits TGFB1-mediated signaling and the HTRA protease activity is required for this inhibition. May interact with THSD4; this interaction may lead to sequestration by FBN1 microfibril assembly and attenuation of TGFB signaling. Interacts with CD109, DPT and ASPN. Interacts with EFEMP2. Interacts with TSKU; the interaction contributes to regulation of the hair cycle. Interacts with TGFBR3. As to quaternary structure, homodimer; disulfide-linked. Interacts with transforming growth factor beta-1 (TGF-beta-1) chain; interaction is non-covalent and maintains TGF-beta-1 in a latent state; each latency-associated peptide (LAP) monomer interacts with TGF-beta-1 in the other monomer. Interacts with LTBP1; leading to regulation of TGF-beta-1 activation. Interacts with LRRC32/GARP; leading to regulation of TGF-beta-1 activation on the surface of activated regulatory T-cells (Tregs). Interacts with LRRC33/NRROS; leading to regulation of TGF-beta-1 activation in macrophages and microglia. Interacts (via cell attachment site) with integrins ITGAV and ITGB6 (ITGAV:ITGB6), leading to release of the active TGF-beta-1. Interacts with NREP; the interaction results in a decrease in TGFB1 autoinduction. Interacts with HSP90AB1; inhibits latent TGFB1 activation. In terms of assembly, homodimer; disulfide-linked. Interacts with TGF-beta receptors (TGFBR1 and TGFBR2), leading to signal transduction. Transforming growth factor beta-1 proprotein: The precursor proprotein is cleaved in the Golgi apparatus by FURIN to form Transforming growth factor beta-1 (TGF-beta-1) and Latency-associated peptide (LAP) chains, which remain non-covalently linked, rendering TGF-beta-1 inactive. Post-translationally, N-glycosylated. Deglycosylation leads to activation of Transforming growth factor beta-1 (TGF-beta-1); mechanisms triggering deglycosylation-driven activation of TGF-beta-1 are however unclear.

The protein resides in the secreted. Its subcellular location is the extracellular space. The protein localises to the extracellular matrix. Transforming growth factor beta-1 proprotein: Precursor of the Latency-associated peptide (LAP) and Transforming growth factor beta-1 (TGF-beta-1) chains, which constitute the regulatory and active subunit of TGF-beta-1, respectively. In terms of biological role, required to maintain the Transforming growth factor beta-1 (TGF-beta-1) chain in a latent state during storage in extracellular matrix. Associates non-covalently with TGF-beta-1 and regulates its activation via interaction with 'milieu molecules', such as LTBP1, LRRC32/GARP and LRRC33/NRROS, that control activation of TGF-beta-1. Interaction with LRRC33/NRROS regulates activation of TGF-beta-1 in macrophages and microglia. Interaction with LRRC32/GARP controls activation of TGF-beta-1 on the surface of activated regulatory T-cells (Tregs). Interaction with integrins (ITGAV:ITGB6 or ITGAV:ITGB8) results in distortion of the Latency-associated peptide chain and subsequent release of the active TGF-beta-1. Functionally, multifunctional protein that regulates the growth and differentiation of various cell types and is involved in various processes, such as normal development, immune function, microglia function and responses to neurodegeneration. Activation into mature form follows different steps: following cleavage of the proprotein in the Golgi apparatus, Latency-associated peptide (LAP) and Transforming growth factor beta-1 (TGF-beta-1) chains remain non-covalently linked rendering TGF-beta-1 inactive during storage in extracellular matrix. At the same time, LAP chain interacts with 'milieu molecules', such as LTBP1, LRRC32/GARP and LRRC33/NRROS that control activation of TGF-beta-1 and maintain it in a latent state during storage in extracellular milieus. TGF-beta-1 is released from LAP by integrins (ITGAV:ITGB6 or ITGAV:ITGB8): integrin-binding to LAP stabilizes an alternative conformation of the LAP bowtie tail and results in distortion of the LAP chain and subsequent release of the active TGF-beta-1. Once activated following release of LAP, TGF-beta-1 acts by binding to TGF-beta receptors (TGFBR1 and TGFBR2), which transduce signal. While expressed by many cells types, TGF-beta-1 only has a very localized range of action within cell environment thanks to fine regulation of its activation by Latency-associated peptide chain (LAP) and 'milieu molecules'. Plays an important role in bone remodeling: acts as a potent stimulator of osteoblastic bone formation, causing chemotaxis, proliferation and differentiation in committed osteoblasts. Can promote either T-helper 17 cells (Th17) or regulatory T-cells (Treg) lineage differentiation in a concentration-dependent manner. At high concentrations, leads to FOXP3-mediated suppression of RORC and down-regulation of IL-17 expression, favoring Treg cell development. At low concentrations in concert with IL-6 and IL-21, leads to expression of the IL-17 and IL-23 receptors, favoring differentiation to Th17 cells. Stimulates sustained production of collagen through the activation of CREB3L1 by regulated intramembrane proteolysis (RIP). Mediates SMAD2/3 activation by inducing its phosphorylation and subsequent translocation to the nucleus. Positively regulates odontoblastic differentiation in dental papilla cells, via promotion of IPO7-mediated translocation of phosphorylated SMAD2 to the nucleus and subsequent transcription of target genes. Can induce epithelial-to-mesenchymal transition (EMT) and cell migration in various cell types. The chain is Transforming growth factor beta-1 proprotein (TGFB1) from Chlorocebus aethiops (Green monkey).